Here is a 782-residue protein sequence, read N- to C-terminus: MRQKSLNVLEFDKIKALIENETISDLGKEKVVDMAPATDFNTVEFQMNETDEISQIYNKHRMPSLSGLAKISTYIHRAKIGGVLSVSELNVIKRLIQIQNQYKTFYNNLLNEEETINYPILNDRMEQLPVLSDLYQSIHQKCDTYDLYDNASYELQGIRSKISSTNQRIKQNLDKIVKSQANQKKLSDAIVTVRNERNVIPVKAEYRQDFNGIVHDQSASGQTLYIEPSSIVEMSNQISRLKNDEAIERERILSALTVEVAEEADACLISESIMGQIDFLTAKARYASSIKGTKPQFTKDRTVYLPKAFHPLLDKQTVVANTIEFAQDIETVIITGPNTGGKTVTLKTLGLIIVMAQSGILIPTLDGSQLSIFENVYCDIGDEQSIEQSLSTFSSHMKNIVEILQDTTKNSLILFDELGAGTDPSEGAALAMSILDHVHEIGSLVMATTHYPELKAYSYNREGVMNASVEFDVNTLSPTYKLLMGVPGRSNAFDISKKLGLNMKVIQKAKSMIGQDEQEINEMIASLESNSKRVDEQRIELDYLLREAQDTHDALAKQYEQYQNHEKQLMNEAKEKANQRVKSATKEADDILKELRELRDQKGADVKEHELIDKKKQLDDQYEAKSLKQNVQKKKWDEINAGDEVKVLTYGQKGEVLELIDNNEAVVQMGIIKMKLPLEDLEKTKKTKSEPTKMIKRENRQSIKMELDLRGYRYDEAMVAVDQYLDQAVLSNYEQVYIIHGKGTGALQKGVQNHLKRHKSVASYRNGMPSEGGFGVTVVEIK.

336 to 343 contacts ATP; it reads GPNTGGKT. Residues 707 to 782 form the Smr domain; it reads LDLRGYRYDE…GFGVTVVEIK (76 aa).

The protein belongs to the DNA mismatch repair MutS family. MutS2 subfamily. As to quaternary structure, homodimer. Binds to stalled ribosomes, contacting rRNA.

Its function is as follows. Endonuclease that is involved in the suppression of homologous recombination and thus may have a key role in the control of bacterial genetic diversity. Acts as a ribosome collision sensor, splitting the ribosome into its 2 subunits. Detects stalled/collided 70S ribosomes which it binds and splits by an ATP-hydrolysis driven conformational change. Acts upstream of the ribosome quality control system (RQC), a ribosome-associated complex that mediates the extraction of incompletely synthesized nascent chains from stalled ribosomes and their subsequent degradation. Probably generates substrates for RQC. This is Endonuclease MutS2 from Staphylococcus saprophyticus subsp. saprophyticus (strain ATCC 15305 / DSM 20229 / NCIMB 8711 / NCTC 7292 / S-41).